Here is a 288-residue protein sequence, read N- to C-terminus: MAEKKQWHETLHDQFGQYFAVDNVLYHEKTDHQDLIIFENAAFGRVMALDGVVQTTERDEFIYHEMMTHVPLLAHGHAKHVLIIGGGDGAMLREVTRHKNVESITMVEIDAGIVSFCRQYLPNHNAGSYDDPRFKLVIDDGVNFVNQTSQTFDVIISDCTDPIGPGESLFTSAFYEGCKRCLNPGGIFVAQNGVCFLQQEEAIDSYRKLSHYFSDVGFYQAAIPTYYGGIMTFAWATDNDALRHLSTEIIQARFLASGLKCRYYNPAIHTAAFALPQYLQDALASQPS.

Residues 9 to 238 (ETLHDQFGQY…GIMTFAWATD (230 aa)) enclose the PABS domain. Gln-33 serves as a coordination point for S-methyl-5'-thioadenosine. Spermidine contacts are provided by His-64 and Asp-88. Residues Glu-108 and 140–141 (DG) contribute to the S-methyl-5'-thioadenosine site. The active-site Proton acceptor is Asp-158. 158 to 161 (DCTD) is a binding site for spermidine. An S-methyl-5'-thioadenosine-binding site is contributed by Pro-165.

It belongs to the spermidine/spermine synthase family. As to quaternary structure, homodimer or homotetramer.

It localises to the cytoplasm. It carries out the reaction S-adenosyl 3-(methylsulfanyl)propylamine + putrescine = S-methyl-5'-thioadenosine + spermidine + H(+). Its pathway is amine and polyamine biosynthesis; spermidine biosynthesis; spermidine from putrescine: step 1/1. In terms of biological role, catalyzes the irreversible transfer of a propylamine group from the amino donor S-adenosylmethioninamine (decarboxy-AdoMet) to putrescine (1,4-diaminobutane) to yield spermidine. The protein is Polyamine aminopropyltransferase of Shigella sonnei (strain Ss046).